The sequence spans 337 residues: GTP 3',8-cyclase (337 aa).

In terms of domain architecture, Radical SAM core spans 17–242 (AFQRRYYYLR…QSKGLLDGPA (226 aa)). Arg26 is a binding site for GTP. [4Fe-4S] cluster contacts are provided by Cys33 and Cys37. Tyr39 is an S-adenosyl-L-methionine binding site. A [4Fe-4S] cluster-binding site is contributed by Cys40. Residue Arg76 participates in GTP binding. Gly80 lines the S-adenosyl-L-methionine pocket. Thr107 contributes to the GTP binding site. Ser131 contributes to the S-adenosyl-L-methionine binding site. GTP is bound at residue Lys168. Residue Met202 participates in S-adenosyl-L-methionine binding. [4Fe-4S] cluster-binding residues include Cys265 and Cys268. 270 to 272 (RLR) contributes to the GTP binding site. Residue Cys282 coordinates [4Fe-4S] cluster.

Belongs to the radical SAM superfamily. MoaA family. In terms of assembly, monomer and homodimer. [4Fe-4S] cluster is required as a cofactor.

It catalyses the reaction GTP + AH2 + S-adenosyl-L-methionine = (8S)-3',8-cyclo-7,8-dihydroguanosine 5'-triphosphate + 5'-deoxyadenosine + L-methionine + A + H(+). Its pathway is cofactor biosynthesis; molybdopterin biosynthesis. Its function is as follows. Catalyzes the cyclization of GTP to (8S)-3',8-cyclo-7,8-dihydroguanosine 5'-triphosphate. The sequence is that of GTP 3',8-cyclase from Pasteurella multocida (strain Pm70).